Reading from the N-terminus, the 310-residue chain is Solute carrier family 25 member 47 (310 aa).

Solcar repeat units follow at residues 1–80 (MDFV…CLAH), 93–208 (PTKA…LCEW), and 217–304 (PDVL…VLRL). The next 6 membrane-spanning stretches (helical) occupy residues 3–23 (FVAG…LDTV), 55–75 (GLSL…GTYH), 98–114 (ITLS…FLTS), 194–210 (SFAT…EWLT), 219–239 (VLGV…VATP), and 280–298 (LALN…FVAY).

The protein belongs to the mitochondrial carrier (TC 2.A.29) family. In terms of tissue distribution, specifically expressed in liver (at protein level).

The protein resides in the mitochondrion inner membrane. Its subcellular location is the mitochondrion outer membrane. It catalyses the reaction NAD(+)(in) = NAD(+)(out). The catalysed reaction is acetyl-CoA(in) = acetyl-CoA(out). Mitochondrial NAD(+) transporter that acts as a 'metabolic gate' in hepatic lipogenesis. Provides NAD(+) substrate to mitochondrial SIRT3 deacetylase and enables its NAD(+)-dependent activities in mitochondrial energy metabolism. This triggers downstream activation of PRKAA1/AMPK-alpha signaling cascade that negatively regulates sterol regulatory element-binding protein (SREBP) transcriptional activities and ATP-consuming lipogenesis to restore cellular energy balance. May transport other mitochondrial metabolites having an aromatic nucleotide and phosphate groups, such as acetyl-CoA. Does not transport amino acids. The transport mechanism remains to be elucidated. In Mus musculus (Mouse), this protein is Solute carrier family 25 member 47.